A 245-amino-acid polypeptide reads, in one-letter code: 1-(5-phosphoribosyl)-5-[(5-phosphoribosylamino)methylideneamino] imidazole-4-carboxamide isomerase (245 aa).

Catalysis depends on D7, which acts as the Proton acceptor. Catalysis depends on D129, which acts as the Proton donor.

Belongs to the HisA/HisF family.

It localises to the cytoplasm. The catalysed reaction is 1-(5-phospho-beta-D-ribosyl)-5-[(5-phospho-beta-D-ribosylamino)methylideneamino]imidazole-4-carboxamide = 5-[(5-phospho-1-deoxy-D-ribulos-1-ylimino)methylamino]-1-(5-phospho-beta-D-ribosyl)imidazole-4-carboxamide. It functions in the pathway amino-acid biosynthesis; L-histidine biosynthesis; L-histidine from 5-phospho-alpha-D-ribose 1-diphosphate: step 4/9. This chain is 1-(5-phosphoribosyl)-5-[(5-phosphoribosylamino)methylideneamino] imidazole-4-carboxamide isomerase, found in Edwardsiella ictaluri (strain 93-146).